Reading from the N-terminus, the 908-residue chain is Protein translocase subunit SecA (908 aa).

Residues glutamine 87, 105-109 (GEGKT), and aspartate 512 contribute to the ATP site. Positions 860 to 908 (AESLVGSSDEHEAVTAQAPMIRDGEKVGRNDPCPCGSGRKYKQCHGKLS) are disordered. 4 residues coordinate Zn(2+): cysteine 892, cysteine 894, cysteine 903, and histidine 904. Basic residues predominate over residues 898–908 (RKYKQCHGKLS).

Belongs to the SecA family. As to quaternary structure, monomer and homodimer. Part of the essential Sec protein translocation apparatus which comprises SecA, SecYEG and auxiliary proteins SecDF-YajC and YidC. Requires Zn(2+) as cofactor.

Its subcellular location is the cell inner membrane. It is found in the cytoplasm. It carries out the reaction ATP + H2O + cellular proteinSide 1 = ADP + phosphate + cellular proteinSide 2.. Its function is as follows. Part of the Sec protein translocase complex. Interacts with the SecYEG preprotein conducting channel. Has a central role in coupling the hydrolysis of ATP to the transfer of proteins into and across the cell membrane, serving both as a receptor for the preprotein-SecB complex and as an ATP-driven molecular motor driving the stepwise translocation of polypeptide chains across the membrane. This Shewanella baltica (strain OS155 / ATCC BAA-1091) protein is Protein translocase subunit SecA.